Reading from the N-terminus, the 1475-residue chain is ABC transporter G family member 15 (1475 aa).

Residues methionine 1–glycine 10 show a composition bias toward basic and acidic residues. Disordered stretches follow at residues methionine 1–isoleucine 40 and asparagine 75–alanine 94. Residues asparagine 17–asparagine 34 are compositionally biased toward low complexity. The stretch at asparagine 25–glutamate 67 forms a coiled coil. Residues leucine 155–proline 404 enclose the ABC transporter 1 domain. One can recognise an ABC transmembrane type-2 1 domain in the interval tryptophan 507–serine 753. Transmembrane regions (helical) follow at residues isoleucine 596 to leucine 616, phenylalanine 623 to tyrosine 641, isoleucine 653 to isoleucine 673, valine 680 to methionine 699, and isoleucine 770 to isoleucine 790. In terms of domain architecture, ABC transporter 2 spans phenylalanine 842–valine 1087. Glycine 879–threonine 886 is a binding site for ATP. The next 6 membrane-spanning stretches (helical) occupy residues glycine 1180–phenylalanine 1200, phenylalanine 1216–isoleucine 1236, phenylalanine 1256–phenylalanine 1276, phenylalanine 1293–isoleucine 1313, alanine 1323–isoleucine 1343, and phenylalanine 1449–leucine 1469. Positions glycine 1180–leucine 1404 constitute an ABC transmembrane type-2 2 domain.

It belongs to the ABC transporter superfamily. ABCG family. PDR (TC 3.A.1.205) subfamily.

The protein resides in the membrane. The sequence is that of ABC transporter G family member 15 (abcG15) from Dictyostelium discoideum (Social amoeba).